We begin with the raw amino-acid sequence, 917 residues long: Coiled-coil domain-containing protein 186 (917 aa).

3 disordered regions span residues 1–52 (MKIR…SGDE), 97–118 (SCAN…PGGD), and 701–769 (TQRR…SVAV). Positions 33–44 (TTEKTSELRDDS) are enriched in basic and acidic residues. Residues 220–736 (RYLQQELTVK…TENGNHDKDI (517 aa)) adopt a coiled-coil conformation. Basic and acidic residues predominate over residues 722 to 736 (RKLEQTENGNHDKDI). Residues 737 to 748 (SSMGSRSSSSGS) are compositionally biased toward low complexity. Ser759 is subject to Phosphoserine. 2 coiled-coil regions span residues 778 to 822 (AMLI…IQSY) and 874 to 913 (KLQA…LEQR).

As to expression, expressed in postnatal germ cells.

The polypeptide is Coiled-coil domain-containing protein 186 (Ccdc186) (Mus musculus (Mouse)).